The chain runs to 186 residues: Early nodulin-like protein 13 (186 aa).

The N-terminal stretch at 1 to 23 is a signal peptide; that stretch reads MAQRTLVATFFLIFFLLTNLVCS. The 105-residue stretch at 24-128 folds into the Phytocyanin domain; sequence KEIIVGGKTS…GEKLHIVVMS (105 aa). The cysteines at positions 82 and 116 are disulfide-linked. N-linked (GlcNAc...) asparagine glycosylation is found at Asn-83 and Asn-90. Residue Ala-165 is the site of GPI-anchor amidated alanine attachment. A propeptide spans 166–186 (removed in mature form); it reads SSLTRQVGVLGFVGLLAIVLL.

It belongs to the early nodulin-like (ENODL) family. Mostly expressed in seedlings, siliques and flowers, and, to a lower extent, in roots, stems and seeds, but barely in leaves.

The protein localises to the cell membrane. May act as a carbohydrate transporter. Required, together with ENODL11, ENODL12, ENODL13, ENODL14 and ENODL15, for male-female communication and pollen tube reception and burst at the synergid cell surface of the female gametophyte. This Arabidopsis thaliana (Mouse-ear cress) protein is Early nodulin-like protein 13.